Reading from the N-terminus, the 488-residue chain is Acetyl-CoA decarbonylase/synthase complex subunit gamma (488 aa).

The region spanning 1–61 (MPKKISAMDI…FEKNKKKIIE (61 aa)) is the 4Fe-4S domain. [4Fe-4S] cluster-binding residues include cysteine 19, cysteine 22, cysteine 27, and cysteine 44.

Heterodimer of delta and gamma chains. The ACDS complex is made up of alpha, epsilon, beta, gamma and delta chains with a probable stoichiometry of (alpha(2)epsilon(2))(4)-beta(8)-(gamma(1)delta(1))(8). Corrinoid serves as cofactor. Requires [4Fe-4S] cluster as cofactor.

The enzyme catalyses 5,6,7,8-tetrahydrosarcinapterin + methyl-Co(III)-[corrinoid Fe-S protein] = 5-methyltetrahydrosarcinapterin + Co(I)-[corrinoid Fe-S protein] + H(+). In terms of biological role, part of a complex that catalyzes the reversible cleavage of acetyl-CoA, allowing autotrophic growth from CO(2). This is Acetyl-CoA decarbonylase/synthase complex subunit gamma from Methanocaldococcus jannaschii (strain ATCC 43067 / DSM 2661 / JAL-1 / JCM 10045 / NBRC 100440) (Methanococcus jannaschii).